The chain runs to 228 residues: NAD(P)H-hydrate epimerase (228 aa).

The YjeF N-terminal domain occupies 9–214 (AQNIDQELFN…DLLLKKYELE (206 aa)). 60-64 (NNGGD) contacts (6S)-NADPHX. The K(+) site is built by N61 and D125. Residues 129-135 (GFSFKGE) and D158 each bind (6S)-NADPHX. Residue S161 coordinates K(+).

The protein belongs to the NnrE/AIBP family. K(+) is required as a cofactor.

The catalysed reaction is (6R)-NADHX = (6S)-NADHX. It carries out the reaction (6R)-NADPHX = (6S)-NADPHX. Its function is as follows. Catalyzes the epimerization of the S- and R-forms of NAD(P)HX, a damaged form of NAD(P)H that is a result of enzymatic or heat-dependent hydration. This is a prerequisite for the S-specific NAD(P)H-hydrate dehydratase to allow the repair of both epimers of NAD(P)HX. The protein is NAD(P)H-hydrate epimerase of Nematostella vectensis (Starlet sea anemone).